A 251-amino-acid chain; its full sequence is Octanoyltransferase (251 aa).

The region spanning 56 to 241 is the BPL/LPL catalytic domain; it reads ADTGDEIWVV…NLDGASAAAD (186 aa). Residues 96-103, 168-170, and 181-183 contribute to the substrate site; these read RGGQITYH, ALG, and GLS. Cys-199 serves as the catalytic Acyl-thioester intermediate.

Belongs to the LipB family.

Its subcellular location is the cytoplasm. The catalysed reaction is octanoyl-[ACP] + L-lysyl-[protein] = N(6)-octanoyl-L-lysyl-[protein] + holo-[ACP] + H(+). The protein operates within protein modification; protein lipoylation via endogenous pathway; protein N(6)-(lipoyl)lysine from octanoyl-[acyl-carrier-protein]: step 1/2. Its function is as follows. Catalyzes the transfer of endogenously produced octanoic acid from octanoyl-acyl-carrier-protein onto the lipoyl domains of lipoate-dependent enzymes. Lipoyl-ACP can also act as a substrate although octanoyl-ACP is likely to be the physiological substrate. In Burkholderia cenocepacia (strain HI2424), this protein is Octanoyltransferase.